The primary structure comprises 480 residues: Protein nucleotidyltransferase YdiU (480 aa).

Positions 86, 88, 89, 109, 121, 122, 172, and 179 each coordinate ATP. Residue aspartate 248 is the Proton acceptor of the active site. 2 residues coordinate Mg(2+): asparagine 249 and aspartate 258. Aspartate 258 is a binding site for ATP.

This sequence belongs to the SELO family. Mg(2+) is required as a cofactor. Mn(2+) serves as cofactor.

The enzyme catalyses L-seryl-[protein] + ATP = 3-O-(5'-adenylyl)-L-seryl-[protein] + diphosphate. The catalysed reaction is L-threonyl-[protein] + ATP = 3-O-(5'-adenylyl)-L-threonyl-[protein] + diphosphate. It catalyses the reaction L-tyrosyl-[protein] + ATP = O-(5'-adenylyl)-L-tyrosyl-[protein] + diphosphate. It carries out the reaction L-histidyl-[protein] + UTP = N(tele)-(5'-uridylyl)-L-histidyl-[protein] + diphosphate. The enzyme catalyses L-seryl-[protein] + UTP = O-(5'-uridylyl)-L-seryl-[protein] + diphosphate. The catalysed reaction is L-tyrosyl-[protein] + UTP = O-(5'-uridylyl)-L-tyrosyl-[protein] + diphosphate. Nucleotidyltransferase involved in the post-translational modification of proteins. It can catalyze the addition of adenosine monophosphate (AMP) or uridine monophosphate (UMP) to a protein, resulting in modifications known as AMPylation and UMPylation. The sequence is that of Protein nucleotidyltransferase YdiU from Enterobacter sp. (strain 638).